The chain runs to 205 residues: Protein phosphatase inhibitor 2 (205 aa).

Disordered regions lie at residues 1 to 46 and 64 to 205; these read MAAS…KSQK and GLMK…SQSS. The residue at position 2 (A2) is an N-acetylalanine. Required for binding PPP1CC regions lie at residues 12–17 and 43–55; these read KGILKN and KSQKWDEMNILAT. The span at 17–26 shows a compositional bias: polar residues; it reads NKTSSTSSRV. Positions 35 to 46 are enriched in basic and acidic residues; that stretch reads SVDEELSKKSQK. S44 carries the post-translational modification Phosphoserine; by ATM. T73 bears the Phosphothreonine; by GSK3 mark. A compositionally biased stretch (acidic residues) spans 80 to 91; the sequence is GDDDDAYSDTET. Residue S87 is modified to Phosphoserine. T89, T92, and T96 each carry phosphothreonine. The span at 110–120 shows a compositional bias: basic and acidic residues; that stretch reads SEPKYRIREQE. 4 positions are modified to phosphoserine: S121, S122, S127, and S130. Positions 121–130 are enriched in acidic residues; the sequence is SSGEEDSDLS. Residues 131–143 are compositionally biased toward basic and acidic residues; sequence PEEREKKRQFEMK. A required for binding PPP1CC catalytic center, displacing metal ions and inhibition of PPP1CC catalytic activity region spans residues 147–150; that stretch reads HYNE. Residues 167–179 are compositionally biased toward acidic residues; it reads DDEEDEEMSETAD. A compositionally biased stretch (polar residues) spans 182-205; sequence SMNTEESNQGSTPSDQRQNKSQSS.

This sequence belongs to the protein phosphatase inhibitor 2 family. Heterodimer with PP1. In terms of processing, phosphorylation on Ser-44 by ATM activates PP1 by dissociating the PP1-PPP1R2 complex. Phosphorylation on Thr-73 by GSK3 activates PP1 by dissociating the PP1-PPP1R2 complex.

Functionally, inhibitor of protein-phosphatase 1. This is Protein phosphatase inhibitor 2 (PPP1R2) from Oryctolagus cuniculus (Rabbit).